We begin with the raw amino-acid sequence, 320 residues long: Large ribosomal subunit protein uL10y (320 aa).

The interval 289–320 (AGGGAPAAAKVEEKEESDEEDYGGDFGLFDEE) is disordered. Positions 302–320 (KEESDEEDYGGDFGLFDEE) are enriched in acidic residues. Position 305 is a phosphoserine (serine 305). A Phosphotyrosine modification is found at tyrosine 310.

This sequence belongs to the universal ribosomal protein uL10 family. In terms of assembly, P0 forms a pentameric complex by interaction with dimers of P1 and P2.

Functionally, ribosomal protein P0 is the functional equivalent of E.coli protein L10. This Arabidopsis thaliana (Mouse-ear cress) protein is Large ribosomal subunit protein uL10y (RPP0B).